The primary structure comprises 183 residues: QASIFSRFFRMFSFIFPFVNVIKLIIASVTSLVCLAFSCVALGGSAVALIVSTPLFIMFSPILVPATIATTLLASGLMAGTTLGLTGIGLIMGLVRTAGGVSLLQSPLRKIIVNRIKARLGGGGGGSRLARLKKILGLLNKLRGMGAGGAAAPAAEPAPAAEAAPAAEAAPAAAPAAAPAAAP.

The tract at residues 1 to 23 (QASIFSRFFRMFSFIFPFVNVIK) is polar. The next 3 membrane-spanning stretches (helical) occupy residues 24 to 44 (LIIA…ALGG), 46 to 66 (AVAL…LVPA), and 72 to 92 (LLAS…GLIM). A hydrophobic region spans residues 24–95 (LIIASVTSLV…TGIGLIMGLV (72 aa)).

This sequence belongs to the oleosin family. In terms of tissue distribution, the full-length protein is found in the tapetal lipid bodies of immature anthers, the proteolytically cleaved C-terminal product is found on the coats of pollen grains. Not present in seeds.

The protein resides in the lipid droplet. It localises to the membrane. Its function is as follows. Many of the major pollen coat proteins are derived from endoproteolytic cleavage of oleosin-like proteins. This is Oleosin-B2 (OlnB2) from Brassica napus (Rape).